We begin with the raw amino-acid sequence, 91 residues long: RNA-binding protein Hfq (91 aa).

The 60-residue stretch at 9-68 (DPFLNALRRERVPVSVYLVNGIKLQGTIESFDQFVVLLRNTVSQMVYKHAISTVVPARNV) folds into the Sm domain.

Belongs to the Hfq family. In terms of assembly, homohexamer.

Its function is as follows. RNA chaperone that binds small regulatory RNA (sRNAs) and mRNAs to facilitate mRNA translational regulation in response to envelope stress, environmental stress and changes in metabolite concentrations. Also binds with high specificity to tRNAs. In Stenotrophomonas maltophilia (strain K279a), this protein is RNA-binding protein Hfq.